Here is a 90-residue protein sequence, read N- to C-terminus: Probable Fe(2+)-trafficking protein (90 aa).

Belongs to the Fe(2+)-trafficking protein family.

Could be a mediator in iron transactions between iron acquisition and iron-requiring processes, such as synthesis and/or repair of Fe-S clusters in biosynthetic enzymes. The polypeptide is Probable Fe(2+)-trafficking protein (Xylella fastidiosa (strain M23)).